The chain runs to 771 residues: DNA polymerase 1 (771 aa).

This sequence belongs to the DNA polymerase type-B family.

It carries out the reaction DNA(n) + a 2'-deoxyribonucleoside 5'-triphosphate = DNA(n+1) + diphosphate. This chain is DNA polymerase 1 (polI), found in Pyrococcus abyssi.